A 120-amino-acid chain; its full sequence is U13-lycotoxin-Ls1a (120 aa).

A signal peptide spans 1 to 16 (MKILFVLISILYAVYC). Positions 17–54 (FSSEEDVDSAYLANELEPVEDINSEQYAALEPKEEQGR) are excised as a propeptide. 4 disulfide bridges follow: Cys-56/Cys-70, Cys-63/Cys-76, Cys-69/Cys-87, and Cys-78/Cys-85. The Agouti domain occupies 56-95 (CADMGQDCKDDCDCCLNIATCNCWFGRYFCSCTFGDYQTC).

Belongs to the neurotoxin 05 (agouti) family. In terms of processing, contains 6 disulfide bonds. Expressed by the venom gland.

Its subcellular location is the secreted. The chain is U13-lycotoxin-Ls1a from Lycosa singoriensis (Wolf spider).